A 541-amino-acid polypeptide reads, in one-letter code: Glutamyl-tRNA(Gln) amidotransferase subunit B, mitochondrial (541 aa).

It belongs to the GatB/GatE family. GatB subfamily. In terms of assembly, subunit of the heterotrimeric GatFAB amidotransferase (AdT) complex, composed of A, B and F subunits.

Its subcellular location is the mitochondrion. The catalysed reaction is L-glutamyl-tRNA(Gln) + L-glutamine + ATP + H2O = L-glutaminyl-tRNA(Gln) + L-glutamate + ADP + phosphate + H(+). Allows the formation of correctly charged Gln-tRNA(Gln) through the transamidation of misacylated Glu-tRNA(Gln) in the mitochondria. The reaction takes place in the presence of glutamine and ATP through an activated gamma-phospho-Glu-tRNA(Gln). The protein is Glutamyl-tRNA(Gln) amidotransferase subunit B, mitochondrial of Saccharomyces cerevisiae (strain YJM789) (Baker's yeast).